The sequence spans 96 residues: Co-chaperonin GroES 2 (96 aa).

Belongs to the GroES chaperonin family. Heptamer of 7 subunits arranged in a ring. Interacts with the chaperonin GroEL.

The protein resides in the cytoplasm. Functionally, together with the chaperonin GroEL, plays an essential role in assisting protein folding. The GroEL-GroES system forms a nano-cage that allows encapsulation of the non-native substrate proteins and provides a physical environment optimized to promote and accelerate protein folding. GroES binds to the apical surface of the GroEL ring, thereby capping the opening of the GroEL channel. This chain is Co-chaperonin GroES 2, found in Vibrio parahaemolyticus serotype O3:K6 (strain RIMD 2210633).